Reading from the N-terminus, the 319-residue chain is Cobalamin biosynthesis protein CobD (319 aa).

Transmembrane regions (helical) follow at residues Gly-56–Met-76, Val-153–Ala-173, Leu-204–Ile-224, and Ile-290–Leu-310.

Belongs to the CobD/CbiB family.

It localises to the cell membrane. The protein operates within cofactor biosynthesis; adenosylcobalamin biosynthesis. Its function is as follows. Converts cobyric acid to cobinamide by the addition of aminopropanol on the F carboxylic group. This is Cobalamin biosynthesis protein CobD from Photorhabdus laumondii subsp. laumondii (strain DSM 15139 / CIP 105565 / TT01) (Photorhabdus luminescens subsp. laumondii).